The chain runs to 183 residues: Glutathione-regulated potassium-efflux system ancillary protein KefG (183 aa).

The protein belongs to the NAD(P)H dehydrogenase (quinone) family. KefG subfamily. In terms of assembly, interacts with KefB.

The protein resides in the cell inner membrane. It catalyses the reaction a quinone + NADH + H(+) = a quinol + NAD(+). The catalysed reaction is a quinone + NADPH + H(+) = a quinol + NADP(+). Functionally, regulatory subunit of a potassium efflux system that confers protection against electrophiles. Required for full activity of KefB. In Yersinia pestis bv. Antiqua (strain Angola), this protein is Glutathione-regulated potassium-efflux system ancillary protein KefG.